The following is a 126-amino-acid chain: Large ribosomal subunit protein uL22 (126 aa).

The protein belongs to the universal ribosomal protein uL22 family. Part of the 50S ribosomal subunit.

Its function is as follows. This protein binds specifically to 23S rRNA; its binding is stimulated by other ribosomal proteins, e.g. L4, L17, and L20. It is important during the early stages of 50S assembly. It makes multiple contacts with different domains of the 23S rRNA in the assembled 50S subunit and ribosome. The globular domain of the protein is located near the polypeptide exit tunnel on the outside of the subunit, while an extended beta-hairpin is found that lines the wall of the exit tunnel in the center of the 70S ribosome. The polypeptide is Large ribosomal subunit protein uL22 (Sphingopyxis alaskensis (strain DSM 13593 / LMG 18877 / RB2256) (Sphingomonas alaskensis)).